Reading from the N-terminus, the 253-residue chain is Phosphonates import ATP-binding protein PhnC (253 aa).

One can recognise an ABC transporter domain in the interval Val4–Gly247. Gly36–Ser43 provides a ligand contact to ATP.

It belongs to the ABC transporter superfamily. Phosphonates importer (TC 3.A.1.9.1) family. In terms of assembly, the complex is composed of two ATP-binding proteins (PhnC), two transmembrane proteins (PhnE) and a solute-binding protein (PhnD).

It localises to the cell membrane. The catalysed reaction is phosphonate(out) + ATP + H2O = phosphonate(in) + ADP + phosphate + H(+). Functionally, part of the ABC transporter complex PhnCDE involved in phosphonates import. Responsible for energy coupling to the transport system. The polypeptide is Phosphonates import ATP-binding protein PhnC (Frankia casuarinae (strain DSM 45818 / CECT 9043 / HFP020203 / CcI3)).